We begin with the raw amino-acid sequence, 152 residues long: Endoribonuclease YbeY (152 aa).

The Zn(2+) site is built by His-113, His-117, and His-123.

This sequence belongs to the endoribonuclease YbeY family. It depends on Zn(2+) as a cofactor.

It localises to the cytoplasm. Single strand-specific metallo-endoribonuclease involved in late-stage 70S ribosome quality control and in maturation of the 3' terminus of the 16S rRNA. The polypeptide is Endoribonuclease YbeY (Acidovorax sp. (strain JS42)).